The sequence spans 337 residues: Aspartate carbamoyltransferase catalytic subunit (337 aa).

Positions 54 and 55 each coordinate carbamoyl phosphate. An L-aspartate-binding site is contributed by Lys82. Residues Arg104, His134, and Gln137 each contribute to the carbamoyl phosphate site. L-aspartate contacts are provided by Arg177 and Arg232. Positions 277 and 278 each coordinate carbamoyl phosphate.

It belongs to the aspartate/ornithine carbamoyltransferase superfamily. ATCase family. Heterododecamer (2C3:3R2) of six catalytic PyrB chains organized as two trimers (C3), and six regulatory PyrI chains organized as three dimers (R2).

The enzyme catalyses carbamoyl phosphate + L-aspartate = N-carbamoyl-L-aspartate + phosphate + H(+). The protein operates within pyrimidine metabolism; UMP biosynthesis via de novo pathway; (S)-dihydroorotate from bicarbonate: step 2/3. Catalyzes the condensation of carbamoyl phosphate and aspartate to form carbamoyl aspartate and inorganic phosphate, the committed step in the de novo pyrimidine nucleotide biosynthesis pathway. The chain is Aspartate carbamoyltransferase catalytic subunit from Arthrobacter sp. (strain FB24).